Here is a 197-residue protein sequence, read N- to C-terminus: MDAVSMYKYQREAWKRPKDSYVGELLKERLPKWRKGPSVQRIKRPTRIERARRLGYRAKPGYVVVRVRVPKGGRRKSRPKKGRRPKRMGKNKFSPGKSKQWIAEERAQRKYPNLEVLNSYWVGEDGQYKYYEVIMVDPYHPQIKSDHRINWICQKSQKGRVFRGKTGAGKKARGLRKRGKGAEKVRPSLRAHRRRGK.

Basic residues-rich tracts occupy residues 70-90, 163-179, and 187-197; these read PKGGRRKSRPKKGRRPKRMGK, RGKTGAGKKARGLRKRG, and PSLRAHRRRGK. 2 disordered regions span residues 70–99 and 163–197; these read PKGGRRKSRPKKGRRPKRMGKNKFSPGKSK and RGKTGAGKKARGLRKRGKGAEKVRPSLRAHRRRGK.

This sequence belongs to the eukaryotic ribosomal protein eL15 family.

This is Large ribosomal subunit protein eL15 from Methanopyrus kandleri (strain AV19 / DSM 6324 / JCM 9639 / NBRC 100938).